The chain runs to 651 residues: Beta-mannosyltransferase 7 (651 aa).

Topologically, residues 1 to 19 are cytoplasmic; the sequence is MKLEMSSYLHKVPNTGITN. The helical transmembrane segment at 20 to 42 threads the bilayer; that stretch reads LSNSKSIVFIMFCATLLFIITSS. Residues 43 to 651 lie on the Extracellular side of the membrane; it reads RYLTGSESLG…VKIDEKSEET (609 aa). N-linked (GlcNAc...) asparagine glycans are attached at residues Asn-271 and Asn-423.

The protein belongs to the BMT family.

It is found in the membrane. Beta-mannosyltransferase involved in cell wall biosynthesis through beta-1,2-mannosylation of cell wall phosphopeptidomannan. The chain is Beta-mannosyltransferase 7 (BMT7) from Candida albicans (strain SC5314 / ATCC MYA-2876) (Yeast).